We begin with the raw amino-acid sequence, 500 residues long: Proline/betaine transporter (500 aa).

The Cytoplasmic segment spans residues 1-37 (MLKRKKVKPITLRDVTIIDDGKLRKAITAASLGNAME). A helical transmembrane segment spans residues 38–58 (WFDFGVYGFVAYALGKVFFPG). At 59–65 (ADPSVQM) the chain is on the periplasmic side. The chain crosses the membrane as a helical span at residues 66–86 (VAALATFSVPFLIRPLGGLFF). At 87–97 (GMLGDKYGRQK) the chain is on the cytoplasmic side. The helical transmembrane segment at 98 to 118 (ILAITIVIMSISTFCIGLIPS) threads the bilayer. The Periplasmic segment spans residues 119–121 (YDT). The helical transmembrane segment at 122–142 (IGIWAPILLLICKMAQGFSVG) threads the bilayer. At 143–169 (GEYTGASIFVAEYSPDRKRGFMGSWLD) the chain is on the cytoplasmic side. Residues 170-190 (FGSIAGFVLGAGVVVLISTIV) form a helical membrane-spanning segment. Residues 191-194 (GEAN) lie on the Periplasmic side of the membrane. Residues 195 to 215 (FLDWGWRIPFFIALPLGIIGL) form a helical membrane-spanning segment. Over 216-260 (YLRHALEETPAFQQHVDKLEQGDREGLQDGPKVSFKEIATKYWRS) the chain is Cytoplasmic. The chain crosses the membrane as a helical span at residues 261 to 281 (LLTCIGLVIATNVTYYMLLTY). Residues 282–297 (MPSYLSHNLHYSEDHG) lie on the Periplasmic side of the membrane. The chain crosses the membrane as a helical span at residues 298-318 (VLIIIAIMIGMLFVQPVMGLL). Over 319–325 (SDRFGRR) the chain is Cytoplasmic. The chain crosses the membrane as a helical span at residues 326-346 (PFVLLGSVALFVLAIPAFILI). Residues 347-350 (NSNV) are Periplasmic-facing. A helical transmembrane segment spans residues 351-371 (IGLIFAGLLMLAVILNCFTGV). The Cytoplasmic portion of the chain corresponds to 372 to 390 (MASTLPAMFPTHIRYSALA). A helical membrane pass occupies residues 391-411 (AAFNISVLVAGLTPTLAAWLV). Residues 412–416 (ESSQN) lie on the Periplasmic side of the membrane. Residues 417–437 (LMMPAYYLMVVAVVGLITGVT) form a helical membrane-spanning segment. Topologically, residues 438–500 (MKETANRPLK…LVQQHPRIDE (63 aa)) are cytoplasmic. A coiled-coil region spans residues 453 to 498 (ASDIQEAKEILVEHYDNIEQKIDDIDHEIADLQAKRTRLVQQHPRI).

The protein belongs to the major facilitator superfamily. Metabolite:H+ Symporter (MHS) family (TC 2.A.1.6) family.

Its subcellular location is the cell inner membrane. Proton symporter that senses osmotic shifts and responds by importing osmolytes such as proline, glycine betaine, stachydrine, pipecolic acid, ectoine and taurine. It is both an osmosensor and an osmoregulator which is available to participate early in the bacterial osmoregulatory response. This Escherichia coli O157:H7 protein is Proline/betaine transporter (proP).